Here is a 1384-residue protein sequence, read N- to C-terminus: DNA-directed RNA polymerase subunit beta (1384 aa).

This sequence belongs to the RNA polymerase beta chain family. As to quaternary structure, the RNAP catalytic core consists of 2 alpha, 1 beta, 1 beta' and 1 omega subunit. When a sigma factor is associated with the core the holoenzyme is formed, which can initiate transcription.

It carries out the reaction RNA(n) + a ribonucleoside 5'-triphosphate = RNA(n+1) + diphosphate. Functionally, DNA-dependent RNA polymerase catalyzes the transcription of DNA into RNA using the four ribonucleoside triphosphates as substrates. This Xylella fastidiosa (strain M23) protein is DNA-directed RNA polymerase subunit beta.